A 293-amino-acid chain; its full sequence is Protein translocase subunit SecF (293 aa).

6 helical membrane passes run 10–30 (ARIF…SMFA), 130–150 (VKSA…YITI), 158–178 (LAAI…FSVL), 185–205 (SFVA…IVVF), 244–264 (LFAV…FSFA), and 267–287 (VGFC…WLFF).

This sequence belongs to the SecD/SecF family. SecF subfamily. As to quaternary structure, forms a complex with SecD. Part of the essential Sec protein translocation apparatus which comprises SecA, SecYEG and auxiliary proteins SecDF. Other proteins may also be involved.

The protein resides in the cell membrane. Functionally, part of the Sec protein translocase complex. Interacts with the SecYEG preprotein conducting channel. SecDF uses the proton motive force (PMF) to complete protein translocation after the ATP-dependent function of SecA. The sequence is that of Protein translocase subunit SecF from Acidaminococcus fermentans (strain ATCC 25085 / DSM 20731 / CCUG 9996 / CIP 106432 / VR4).